A 545-amino-acid chain; its full sequence is Glucose-6-phosphate isomerase (545 aa).

Glutamate 351 functions as the Proton donor in the catalytic mechanism. Residues histidine 382 and lysine 510 contribute to the active site.

The protein belongs to the GPI family.

The protein resides in the cytoplasm. The enzyme catalyses alpha-D-glucose 6-phosphate = beta-D-fructose 6-phosphate. It participates in carbohydrate biosynthesis; gluconeogenesis. The protein operates within carbohydrate degradation; glycolysis; D-glyceraldehyde 3-phosphate and glycerone phosphate from D-glucose: step 2/4. Its function is as follows. Catalyzes the reversible isomerization of glucose-6-phosphate to fructose-6-phosphate. This Helicobacter pylori (strain ATCC 700392 / 26695) (Campylobacter pylori) protein is Glucose-6-phosphate isomerase.